We begin with the raw amino-acid sequence, 757 residues long: Mitofusin-2 (757 aa).

Residues 1-604 (MSLLFSRCNS…TQEEFMVSMV (604 aa)) lie on the Cytoplasmic side of the membrane. The tract at residues 30 to 94 (KHFVTAKKKI…VRGISEVLAR (65 aa)) is part of a helix bundle domain, formed by helices from N-terminal and C-terminal regions. In terms of domain architecture, Dynamin-type G spans 93 to 342 (ARRHMKVAFF…VRMFEFQNFE (250 aa)). Positions 103 to 110 (GRTSNGKS) are G1 motif. 106 to 111 (SNGKST) serves as a coordination point for GTP. Thr-111 is modified (phosphothreonine; by PINK1). Residues 129–130 (TT) are G2 motif. A G3 motif region spans residues 199–202 (DSPG). Residue 258 to 261 (NRWD) participates in GTP binding. The interval 258-261 (NRWD) is G4 motif. Residue Glu-288 is a region of interest, G5 motif. Residues Ser-305 and Lys-307 each contribute to the GTP site. A part of a helix bundle domain, formed by helices from N-terminal and C-terminal regions region spans residues 359–385 (EQHTVRAKQIAEAVRLIMDSLHMAARE). Residues 391-434 (EEMREERQDRLKFIDKQLELLAQDYKLRIKQITEEVERQVSTAM) are a coiled coil. A Phosphoserine; by PINK1 modification is found at Ser-442. Residues 605 to 625 (TGLASLTSRTSMGILVVGGVV) traverse the membrane as a helical segment. A topological domain (mitochondrial intermembrane) is located at residue Trp-626. The chain crosses the membrane as a helical span at residues 627–647 (KAVGWRLIALSFGLYGLLYVY). Over 648–757 (ERLTWTTKAK…FTHQYLQPSR (110 aa)) the chain is Cytoplasmic. Positions 695–738 (TFAHLCQQVDVTRENLEQEIAAMNKKIEVLDSLQSKAKLLRNKA) form a coiled coil. Residues 722–753 (EVLDSLQSKAKLLRNKAGWLDSELNMFTHQYL) are part of a helix bundle domain, formed by helices from N-terminal and C-terminal regions.

This sequence belongs to the TRAFAC class dynamin-like GTPase superfamily. Dynamin/Fzo/YdjA family. Mitofusin subfamily. Forms homomultimers and heteromultimers with MFN1. Oligomerization is essential for mitochondrion fusion. Interacts with VAT1. Interacts with STOML2; may form heterooligomers. Interacts (phosphorylated) with PRKN. Interacts with EIF2AK3. Interacts with THG1L; THG1L probably functions as a guanyl-nucleotide exchange factor/GEF, activating MFN2. Phosphorylated by PINK1. Post-translationally, ubiquitinated by non-degradative ubiquitin by PRKN, promoting mitochondrial fusion; deubiquitination by USP30 inhibits mitochondrial fusion. Ubiquitinated by HUWE1 when dietary stearate (C18:0) levels are low; ubiquitination inhibits mitochondrial fusion. In terms of tissue distribution, ubiquitous; expressed at low level. Highly expressed in heart and kidney.

It localises to the mitochondrion outer membrane. It carries out the reaction GTP + H2O = GDP + phosphate + H(+). Functionally, mitochondrial outer membrane GTPase that mediates mitochondrial clustering and fusion. Mitochondria are highly dynamic organelles, and their morphology is determined by the equilibrium between mitochondrial fusion and fission events. Overexpression induces the formation of mitochondrial networks. Membrane clustering requires GTPase activity and may involve a major rearrangement of the coiled coil domains. Plays a central role in mitochondrial metabolism and may be associated with obesity and/or apoptosis processes. Plays an important role in the regulation of vascular smooth muscle cell proliferation. Involved in the clearance of damaged mitochondria via selective autophagy (mitophagy). Is required for PRKN recruitment to dysfunctional mitochondria. Involved in the control of unfolded protein response (UPR) upon ER stress including activation of apoptosis and autophagy during ER stress. Acts as an upstream regulator of EIF2AK3 and suppresses EIF2AK3 activation under basal conditions. This is Mitofusin-2 from Homo sapiens (Human).